The sequence spans 434 residues: Eukaryotic translation initiation factor 3 subunit E (434 aa).

Positions 219–392 (FFNHPKGRDL…GHVVMGTQPL (174 aa)) constitute a PCI domain.

Belongs to the eIF-3 subunit E family. Component of the eukaryotic translation initiation factor 3 (eIF-3) complex. The eIF-3 complex interacts with pix. Interacts with mxt.

It localises to the cytoplasm. Component of the eukaryotic translation initiation factor 3 (eIF-3) complex, which is involved in protein synthesis of a specialized repertoire of mRNAs and, together with other initiation factors, stimulates binding of mRNA and methionyl-tRNAi to the 40S ribosome. The eIF-3 complex specifically targets and initiates translation of a subset of mRNAs involved in cell proliferation. The sequence is that of Eukaryotic translation initiation factor 3 subunit E (eIF3-S6) from Drosophila virilis (Fruit fly).